The sequence spans 157 residues: Protein Smg homolog (157 aa).

It belongs to the Smg family.

In Xanthomonas euvesicatoria pv. vesicatoria (strain 85-10) (Xanthomonas campestris pv. vesicatoria), this protein is Protein Smg homolog.